The sequence spans 567 residues: Formate--tetrahydrofolate ligase (567 aa).

68-75 lines the ATP pocket; it reads TPLGEGKT.

It belongs to the formate--tetrahydrofolate ligase family.

It catalyses the reaction (6S)-5,6,7,8-tetrahydrofolate + formate + ATP = (6R)-10-formyltetrahydrofolate + ADP + phosphate. It participates in one-carbon metabolism; tetrahydrofolate interconversion. The chain is Formate--tetrahydrofolate ligase from Desulforamulus reducens (strain ATCC BAA-1160 / DSM 100696 / MI-1) (Desulfotomaculum reducens).